Reading from the N-terminus, the 397-residue chain is Subtilisin-like protease 3 (397 aa).

Residues 1–19 form the signal peptide; that stretch reads MGCIKVISVFLAAIAAVDA. The propeptide occupies 20 to 116; it reads RAFFHNRGGS…VEHDRVVKLA (97 aa). The Inhibitor I9 domain maps to 35–116; sequence SYIVVMKDGV…VEHDRVVKLA (82 aa). Residues 126 to 397 enclose the Peptidase S8 domain; the sequence is TWGLGRVSHR…NRLLYNGSGQ (272 aa). Catalysis depends on charge relay system residues Asp158 and His189. The N-linked (GlcNAc...) asparagine glycan is linked to Asn250. Ser344 acts as the Charge relay system in catalysis. The N-linked (GlcNAc...) asparagine glycan is linked to Asn393.

It belongs to the peptidase S8 family.

It is found in the secreted. In terms of biological role, secreted subtilisin-like serine protease with keratinolytic activity that contributes to pathogenicity. This chain is Subtilisin-like protease 3 (SUB3), found in Trichophyton tonsurans (Scalp ringworm fungus).